We begin with the raw amino-acid sequence, 212 residues long: Large ribosomal subunit protein uL3 (212 aa).

Gln153 carries the N5-methylglutamine modification.

Belongs to the universal ribosomal protein uL3 family. Part of the 50S ribosomal subunit. Forms a cluster with proteins L14 and L19. Post-translationally, methylated by PrmB.

One of the primary rRNA binding proteins, it binds directly near the 3'-end of the 23S rRNA, where it nucleates assembly of the 50S subunit. The polypeptide is Large ribosomal subunit protein uL3 (Acinetobacter baylyi (strain ATCC 33305 / BD413 / ADP1)).